The primary structure comprises 506 residues: Anaerobic nitric oxide reductase transcription regulator NorR (506 aa).

Asp57 is subject to 4-aspartylphosphate. In terms of domain architecture, Sigma-54 factor interaction spans 187–416 (MIGLSPAMTQ…LEHAIHRAVV (230 aa)). ATP contacts are provided by residues 215–222 (GETGTGKE) and 278–287 (ADNGTLFLDE). Residues 481–500 (WAASARALETDVANLHRLAK) constitute a DNA-binding region (H-T-H motif).

Its pathway is nitrogen metabolism; nitric oxide reduction. Its function is as follows. Required for the expression of anaerobic nitric oxide (NO) reductase, acts as a transcriptional activator for at least the norVW operon. Activation also requires sigma-54. In Salmonella heidelberg (strain SL476), this protein is Anaerobic nitric oxide reductase transcription regulator NorR.